The sequence spans 325 residues: tRNA dimethylallyltransferase (325 aa).

Residue 21 to 28 (GPTASGKS) participates in ATP binding. Substrate is bound at residue 23 to 28 (TASGKS). The interaction with substrate tRNA stretch occupies residues 166 to 170 (QRLAR).

Belongs to the IPP transferase family. In terms of assembly, monomer. Mg(2+) is required as a cofactor.

It carries out the reaction adenosine(37) in tRNA + dimethylallyl diphosphate = N(6)-dimethylallyladenosine(37) in tRNA + diphosphate. Its function is as follows. Catalyzes the transfer of a dimethylallyl group onto the adenine at position 37 in tRNAs that read codons beginning with uridine, leading to the formation of N6-(dimethylallyl)adenosine (i(6)A). The sequence is that of tRNA dimethylallyltransferase from Acidiphilium cryptum (strain JF-5).